We begin with the raw amino-acid sequence, 248 residues long: MEKKLISLFSGAGGMDIGFHAAGFSTAVAVEQDPSCCNTLRLNMPDTPVIEGDITSITTQVILEAAKVNPLEIDLVIGGPPCQSFSLAGKRMGMDDPRGMLVLEFLRVVREALPKCFVMENVKGMINWSKGKALEAIMTEASQPIKYAGKEYKYAVSYHVLNAADFGVPQFRERVFIVGNRLGKTFQFPEPTHGPSNQARQIDLFGKQLKPYKTVQDAISTLPPATPPSAMALRVSQTIKDRIKNHGY.

The region spanning 3 to 248 is the SAM-dependent MTase C5-type domain; sequence KKLISLFSGA…IKDRIKNHGY (246 aa). Residue Cys82 is part of the active site.

The protein belongs to the class I-like SAM-binding methyltransferase superfamily. C5-methyltransferase family. As to quaternary structure, heterodimer of an alpha and a beta subunit.

The catalysed reaction is a 2'-deoxycytidine in DNA + S-adenosyl-L-methionine = a 5-methyl-2'-deoxycytidine in DNA + S-adenosyl-L-homocysteine + H(+). Functionally, a methylase, recognizes the double-stranded sequence 5'-CYCGRG-3', methylates C-1 on both strands, and protects the DNA from cleavage by the AquI endonuclease. This is Type II methyltransferase M.AquIA (aquIMA) from Picosynechococcus sp. (strain ATCC 27264 / PCC 7002 / PR-6) (Agmenellum quadruplicatum).